We begin with the raw amino-acid sequence, 492 residues long: Serine/threonine-protein kinase 3 (492 aa).

The region spanning 26–277 (FDVLEKLGEG…ATQLLQHPFI (252 aa)) is the Protein kinase domain. ATP-binding positions include 32-40 (LGEGSYGSV) and lysine 55. The active-site Proton acceptor is aspartate 145. Threonine 179 carries the post-translational modification Phosphothreonine; by autocatalysis. 2 coiled-coil regions span residues 286-328 (LRDL…TMVK) and 443-476 (NLDFEELQMRLTALDPMMEREIEELRQRYTAKRQ). The span at 297–307 (KAKRQQEQQRE) shows a compositional bias: basic and acidic residues. The segment at 297-339 (KAKRQQEQQRELEEDDENSEEEVEVDSHTMVKSGSESAGTMRA) is disordered. Acidic residues predominate over residues 308–320 (LEEDDENSEEEVE). Residues 326 to 339 (MVKSGSESAGTMRA) show a composition bias toward polar residues. In terms of domain architecture, SARAH spans 438–485 (FDFLKNLDFEELQMRLTALDPMMEREIEELRQRYTAKRQPILDAMDAK).

The protein belongs to the protein kinase superfamily. STE Ser/Thr protein kinase family. STE20 subfamily. In terms of assembly, homodimer; mediated via the coiled-coil region. It depends on Mg(2+) as a cofactor.

Its subcellular location is the cytoplasm. It is found in the nucleus. It carries out the reaction L-seryl-[protein] + ATP = O-phospho-L-seryl-[protein] + ADP + H(+). The catalysed reaction is L-threonyl-[protein] + ATP = O-phospho-L-threonyl-[protein] + ADP + H(+). Inhibited by the C-terminal non-catalytic region. Activated by caspase-cleavage. Full activation also requires homodimerization and autophosphorylation of Thr-179. Functionally, stress-activated, pro-apoptotic kinase which, following caspase-cleavage, enters the nucleus and induces chromatin condensation followed by internucleosomal DNA fragmentation. Key component of the Hippo signaling pathway which plays a pivotal role in organ size control and tumor suppression by restricting proliferation and promoting apoptosis. The core of this pathway is composed of a kinase cascade wherein stk3/mst2 and stk4/mst1, in complex with its regulatory protein sav1, phosphorylates and activates lats1/2 in complex with its regulatory protein mob1, which in turn phosphorylates and inactivates yap1 oncoprotein and wwtr1/taz. Phosphorylation of yap1 by lats2 inhibits its translocation into the nucleus to regulate cellular genes important for cell proliferation, cell death, and cell migration. The sequence is that of Serine/threonine-protein kinase 3 (stk3) from Danio rerio (Zebrafish).